A 136-amino-acid chain; its full sequence is uncharacterized protein (136 aa).

The chain crosses the membrane as a helical span at residues 40–62 (LFYSISLCVSLLLHISLCVSVYV).

The protein localises to the membrane. This is an uncharacterized protein from Homo sapiens (Human).